A 901-amino-acid polypeptide reads, in one-letter code: Protein translocase subunit SecA (901 aa).

ATP is bound by residues Q87, G105 to T109, and D512. The segment at H859–Q901 is disordered. Zn(2+) contacts are provided by C885, C887, C896, and H897. Residues K891–Q901 show a composition bias toward basic residues.

Belongs to the SecA family. As to quaternary structure, monomer and homodimer. Part of the essential Sec protein translocation apparatus which comprises SecA, SecYEG and auxiliary proteins SecDF-YajC and YidC. Zn(2+) serves as cofactor.

It localises to the cell inner membrane. The protein resides in the cytoplasm. The enzyme catalyses ATP + H2O + cellular proteinSide 1 = ADP + phosphate + cellular proteinSide 2.. Functionally, part of the Sec protein translocase complex. Interacts with the SecYEG preprotein conducting channel. Has a central role in coupling the hydrolysis of ATP to the transfer of proteins into and across the cell membrane, serving both as a receptor for the preprotein-SecB complex and as an ATP-driven molecular motor driving the stepwise translocation of polypeptide chains across the membrane. In Escherichia coli O157:H7, this protein is Protein translocase subunit SecA.